Reading from the N-terminus, the 276-residue chain is Aldo-keto reductase Mkms_1985 (276 aa).

The active-site Proton donor is Tyr50. The NADPH site is built by Leu190, Ile228, Lys230, Ser231, Val232, Arg236, Ser239, and Asn240. The interval 257–276 is disordered; it reads SSLEDGSRLGPDPKTFNFTG.

The protein belongs to the aldo/keto reductase family.

This chain is Aldo-keto reductase Mkms_1985, found in Mycobacterium sp. (strain KMS).